The primary structure comprises 129 residues: Phosphoribosyl-AMP cyclohydrolase (129 aa).

D77 serves as a coordination point for Mg(2+). Residue C78 participates in Zn(2+) binding. The Mg(2+) site is built by D79 and D81. Zn(2+) is bound by residues C94 and C101.

It belongs to the PRA-CH family. As to quaternary structure, homodimer. Mg(2+) is required as a cofactor. Zn(2+) serves as cofactor.

Its subcellular location is the cytoplasm. It catalyses the reaction 1-(5-phospho-beta-D-ribosyl)-5'-AMP + H2O = 1-(5-phospho-beta-D-ribosyl)-5-[(5-phospho-beta-D-ribosylamino)methylideneamino]imidazole-4-carboxamide. It participates in amino-acid biosynthesis; L-histidine biosynthesis; L-histidine from 5-phospho-alpha-D-ribose 1-diphosphate: step 3/9. Its function is as follows. Catalyzes the hydrolysis of the adenine ring of phosphoribosyl-AMP. In Methanosphaera stadtmanae (strain ATCC 43021 / DSM 3091 / JCM 11832 / MCB-3), this protein is Phosphoribosyl-AMP cyclohydrolase.